Consider the following 189-residue polypeptide: Parkinson disease protein 7 homolog (189 aa).

S-palmitoyl cysteine attachment occurs at residues Cys-46 and Cys-53. Tyr-67 is modified (phosphotyrosine). Cys-106 carries the S-palmitoyl cysteine lipid modification. Residue Cys-106 is the Nucleophile of the active site. A Cysteine sulfinic acid (-SO2H) modification is found at Cys-106. Cys-106 bears the Cysteine sulfinic acid (-SO2H); alternate mark. Residue Cys-106 is the site of S-palmitoyl cysteine; alternate attachment. His-126 is a catalytic residue. Lys-130 participates in a covalent cross-link: Glycyl lysine isopeptide (Lys-Gly) (interchain with G-Cter in SUMO). N6-acetyllysine is present on Lys-148. N6-succinyllysine is present on Lys-182.

This sequence belongs to the peptidase C56 family. In terms of assembly, homodimer. Requires Deglycase activity does not require glutathione as a cofactor, however, glycated glutathione constitutes a PARK7 substrate. as cofactor. Post-translationally, sumoylated on Lys-130 by pias2 or pias4; which is essential for cell-growth promoting activity and transforming activity. Undergoes cleavage of a C-terminal peptide and subsequent activation of protease activity in response to oxidative stress. Larval brain and gut from 96 hours post-fertilization (hpf). Ubiquitous in adult; most abundant in brain, eye, heart and muscle. Within brain, neuronal expression is widespread, particularly in the cerebellum, medullary reticular formation and diencephalon. Expressed in major forebrain and diencephalic dopaminergic cell groups.

The protein localises to the cell membrane. It localises to the cytoplasm. It is found in the nucleus. The protein resides in the membrane raft. Its subcellular location is the mitochondrion. The protein localises to the endoplasmic reticulum. The enzyme catalyses N(omega)-(1-hydroxy-2-oxopropyl)-L-arginyl-[protein] + H2O = lactate + L-arginyl-[protein] + H(+). The catalysed reaction is N(6)-(1-hydroxy-2-oxopropyl)-L-lysyl-[protein] + H2O = lactate + L-lysyl-[protein] + H(+). It carries out the reaction S-(1-hydroxy-2-oxopropyl)-L-cysteinyl-[protein] + H2O = lactate + L-cysteinyl-[protein] + H(+). It catalyses the reaction N(omega)-(1-hydroxy-2-oxoethyl)-L-arginyl-[protein] + H2O = L-arginyl-[protein] + glycolate + H(+). The enzyme catalyses N(6)-(1-hydroxy-2-oxoethyl)-L-lysyl-[protein] + H2O = glycolate + L-lysyl-[protein] + H(+). The catalysed reaction is S-(1-hydroxy-2-oxoethyl)-L-cysteinyl-[protein] + H2O = glycolate + L-cysteinyl-[protein] + H(+). It carries out the reaction N(2)-(1-hydroxy-2-oxopropyl)-dGTP + H2O = lactate + dGTP + H(+). It catalyses the reaction N(2)-(1-hydroxy-2-oxopropyl)-GTP + H2O = lactate + GTP + H(+). The enzyme catalyses N(2)-(1-hydroxy-2-oxopropyl)-GDP + H2O = lactate + GDP + H(+). The catalysed reaction is N(2)-(1-hydroxy-2-oxopropyl)-GMP + H2O = lactate + GMP + H(+). It carries out the reaction N(2)-(1-hydroxy-2-oxoethyl)-dGTP + H2O = dGTP + glycolate + H(+). It catalyses the reaction N(2)-(1-hydroxy-2-oxoethyl)-GTP + H2O = glycolate + GTP + H(+). The enzyme catalyses N(2)-(1-hydroxy-2-oxoethyl)-GDP + H2O = glycolate + GDP + H(+). The catalysed reaction is N(2)-(1-hydroxy-2-oxoethyl)-GMP + H2O = glycolate + GMP + H(+). It carries out the reaction an N(2)-(1-hydroxy-2-oxopropyl)-guanosine in RNA + H2O = a guanosine in RNA + lactate + H(+). It catalyses the reaction an N(2)-(1-hydroxy-2-oxopropyl)-2'-deoxyguanosine in DNA + H2O = a 2'-deoxyguanosine in DNA + lactate + H(+). The enzyme catalyses an N(2)-(1-hydroxy-2-oxoethyl)-guanosine in RNA + H2O = a guanosine in RNA + glycolate + H(+). The catalysed reaction is an N(2)-(1-hydroxy-2-oxoethyl)-2'-deoxyguanosine in DNA + H2O = a 2'-deoxyguanosine in DNA + glycolate + H(+). Multifunctional protein with controversial molecular function which plays an important role in cell protection against oxidative stress and cell death acting as oxidative stress sensor and redox-sensitive chaperone and protease. It is involved in neuroprotective mechanisms like the stabilization of NFE2L2 and PINK1 proteins, male fertility as a positive regulator of androgen signaling pathway as well as cell growth and transformation through, for instance, the modulation of NF-kappa-B signaling pathway. Has been described as a protein and nucleotide deglycase that catalyzes the deglycation of the Maillard adducts formed between amino groups of proteins or nucleotides and reactive carbonyl groups of glyoxals. But this function is rebuted by other works. As a protein deglycase, repairs methylglyoxal- and glyoxal-glycated proteins, and releases repaired proteins and lactate or glycolate, respectively. Deglycates cysteine, arginine and lysine residues in proteins, and thus reactivates these proteins by reversing glycation by glyoxals. Acts on early glycation intermediates (hemithioacetals and aminocarbinols), preventing the formation of advanced glycation endproducts (AGE) that cause irreversible damage. Also functions as a nucleotide deglycase able to repair glycated guanine in the free nucleotide pool (GTP, GDP, GMP, dGTP) and in DNA and RNA. Is thus involved in a major nucleotide repair system named guanine glycation repair (GG repair), dedicated to reversing methylglyoxal and glyoxal damage via nucleotide sanitization and direct nucleic acid repair. Protects histones from adduction by methylglyoxal, controls the levels of methylglyoxal-derived argininine modifications on chromatin. Displays a very low glyoxalase activity that may reflect its deglycase activity. It is involved in neuroprotective mechanisms as well as cell growth and transformation. Its involvement in protein repair could also explain other unrelated functions. Eliminates hydrogen peroxide and protects cells against hydrogen peroxide-induced cell death. Required for correct mitochondrial morphology and function as well as for autophagy of dysfunctional mitochondria. Regulates astrocyte inflammatory responses, may modulate lipid rafts-dependent endocytosis in astrocytes and neuronal cells. Binds to a number of mRNAs containing multiple copies of GG or CC motifs and partially inhibits their translation but dissociates following oxidative stress. Metal-binding protein able to bind copper as well as toxic mercury ions, enhances the cell protection mechanism against induced metal toxicity. This Danio rerio (Zebrafish) protein is Parkinson disease protein 7 homolog.